We begin with the raw amino-acid sequence, 318 residues long: Small ribosomal subunit protein uS3 (318 aa).

The 70-residue stretch at 17-86 (MDEYFAEQLS…NPQIDAQEVK (70 aa)) folds into the KH type-2 domain. A compositionally biased stretch (basic and acidic residues) spans 198–229 (SVEVEEPAEKPAEKPAEKPAEKAAAPKKEAAK). Residues 198–275 (SVEVEEPAEK…VQAETSEEIE (78 aa)) are disordered. The segment covering 234-250 (APAPEAPAPAPEAPAPA) has biased composition (pro residues). A compositionally biased stretch (acidic residues) spans 253 to 275 (EEAEVAEPEEAEEVQAETSEEIE).

Belongs to the universal ribosomal protein uS3 family. In terms of assembly, part of the 30S ribosomal subunit.

In terms of biological role, binds the lower part of the 30S subunit head. The protein is Small ribosomal subunit protein uS3 of Methanosarcina acetivorans (strain ATCC 35395 / DSM 2834 / JCM 12185 / C2A).